The following is a 383-amino-acid chain: Protein RecA (383 aa).

ATP is bound at residue 79–86 (GPESSGKT). A disordered region spans residues 347–369 (IEEDNTEEKQSSKEKETDEKADK). The span at 353 to 369 (EEKQSSKEKETDEKADK) shows a compositional bias: basic and acidic residues.

Belongs to the RecA family.

The protein localises to the cytoplasm. In terms of biological role, can catalyze the hydrolysis of ATP in the presence of single-stranded DNA, the ATP-dependent uptake of single-stranded DNA by duplex DNA, and the ATP-dependent hybridization of homologous single-stranded DNAs. It interacts with LexA causing its activation and leading to its autocatalytic cleavage. The chain is Protein RecA from Streptococcus mutans serotype c (strain ATCC 700610 / UA159).